The primary structure comprises 270 residues: Glutamate racemase (270 aa).

Residues 10–11 (DS) and 42–43 (YG) each bind substrate. The active-site Proton donor/acceptor is the Cys-73. A substrate-binding site is contributed by 74–75 (NT). Cys-184 functions as the Proton donor/acceptor in the catalytic mechanism. Substrate is bound at residue 185–186 (TH).

This sequence belongs to the aspartate/glutamate racemases family.

It carries out the reaction L-glutamate = D-glutamate. Its pathway is cell wall biogenesis; peptidoglycan biosynthesis. Provides the (R)-glutamate required for cell wall biosynthesis. This is Glutamate racemase from Geobacter metallireducens (strain ATCC 53774 / DSM 7210 / GS-15).